The primary structure comprises 193 residues: Auxin-induced protein 22D (193 aa).

Residues 16–68 form a disordered region; sequence ATELRLGLPGSDEPEKRATARSNKRSSPEASDEESISNGSDVTKEDNVVPPAK. The short motif at 19 to 23 is the EAR-like (transcriptional repression) element; it reads LRLGL. Residues 97 to 184 enclose the PB1 domain; the sequence is GMYVKVSMAG…SCKRLRIMKG (88 aa).

Belongs to the Aux/IAA family. In terms of assembly, homodimers and heterodimers.

It is found in the nucleus. Aux/IAA proteins are short-lived transcriptional factors that function as repressors of early auxin response genes at low auxin concentrations. Repression is thought to result from the interaction with auxin response factors (ARFs), proteins that bind to the auxin-responsive promoter element (AuxRE). Formation of heterodimers with ARF proteins may alter their ability to modulate early auxin response genes expression. This is Auxin-induced protein 22D (AUX22D) from Vigna radiata var. radiata (Mung bean).